A 270-amino-acid polypeptide reads, in one-letter code: Short chain dehydrogenase/reductase dpfgG (270 aa).

NADP(+)-binding residues include I18, D69, N96, K130, K171, I200, and N204. K171 functions as the Lowers pKa of active site Tyr in the catalytic mechanism.

This sequence belongs to the short-chain dehydrogenases/reductases (SDR) family.

The protein operates within secondary metabolite biosynthesis; terpenoid biosynthesis. In terms of biological role, short chain dehydrogenase/reductase; part of the gene cluster that mediates the biosynthesis of diterpenoid pyrones. The first step of the pathway is the synthesis of the alpha-pyrone moiety by the polyketide synthase dpfgA via condensation of one acetyl-CoA starter unit with 3 malonyl-CoA units and 2 methylations. The alpha-pyrone is then combined with geranylgeranyl pyrophosphate (GGPP) formed by the GGPP synthase dpfgD through the action of the prenyltransferase dpfgC to yield a linear alpha-pyrone diterpenoid. Subsequent steps in the diterpenoid pyrone biosynthetic pathway involve the decalin core formation, which is initiated by the epoxidation of the C10-C11 olefin by the FAD-dependent oxidoreductase dpfgE, and is followed by a cyclization cascade catalyzed by the terpene cyclase dpfgB. The short chain dehydrogenase/reductase dpfgG then oxidizes the 8S hydroxy group to a ketone and the short chain dehydrogenase/reductase dpfgH reduces the ketone to the 8R hydroxy group to yield higginsianin B. Higginsianin B is further methylated by the methyltransferase dpfgI to produce the intermediate named FDDP B. The cytochrome P450 monooxygenase dfgpJ then catalyzes a three-step oxidation at C-27 to generate a carboxylic acid as well as C-26 hydroxylation. Finally, methyltransferase dpfgK methylates the carboxylic acid generated by dpfgJ, yielding the final diterpenoid pyrones from the pathway which were named FDDP D and FDDP E. The polypeptide is Short chain dehydrogenase/reductase dpfgG (Gibberella zeae (strain ATCC MYA-4620 / CBS 123657 / FGSC 9075 / NRRL 31084 / PH-1) (Wheat head blight fungus)).